Consider the following 608-residue polypeptide: MHTNSPLRADNQDLETQPLLRPNTEESQLLNDEVRINVANETLIKSRWRSIKCLIIYLLGIVLLSFFGVSIVQYIRGHVPPTDVIEKNLVQVTNFKLVEFQLDGWKDNMGSDLNNDTGKYLQVSIHSQIWFDYDKWPGTENDSDARSQRDWIRYINEKVLKTICIDLNNVTTFDGDLVFKNKLGDVVGMEPICFNLAHRQINNLQFKILVKPSIWKIVKVLKKFWNRDFESLNIKSNLDMTIFKRKFGTRFNLLKLNDEILDWKDIIDWEKISATPLRMIQNMIDGISLQGFTLRDSSSDGFHADMRLNPITILGGVDWLHLPPGTSIPFINWEIKLPDCNGEPAIAIPTLSCFNEPINLHHDKDNIVVCLQNEIEGPLPDELLYQECPQNSLTPMSQIVNAVLNQNETVTFAARGHVLEDGIDNNSLIPADMLEDIFQEASFIPITTNATFNSSELIQEFQINDLQLRWAARKKLSLVGTFLGFFDLSFYETHQQDRVRIDTIRGQIDLYHNDINFLNLPMKQWINSSSHILHDEDTGNTQMKLQFDLENDDMEVVNSLELTRTLNEILFQGFTVIHFNATIDASLTTALGPWVLTGLAGEGDTLVT.

The disordered stretch occupies residues 1 to 21 (MHTNSPLRADNQDLETQPLLR). T24 carries the phosphothreonine modification. The residue at position 27 (S27) is a Phosphoserine. A helical membrane pass occupies residues 55–75 (IIYLLGIVLLSFFGVSIVQYI). N-linked (GlcNAc...) asparagine glycosylation is found at N115, N141, N169, N407, N425, N449, N453, N527, and N580.

The protein resides in the membrane. This is an uncharacterized protein from Saccharomyces cerevisiae (strain ATCC 204508 / S288c) (Baker's yeast).